Reading from the N-terminus, the 550-residue chain is Keratin, type II cytoskeletal 74 (550 aa).

The segment at 1–140 (MSRQLNIKSG…DPEIQKVRAQ (140 aa)) is head. Positions 141–176 (EREQIMALNNKFASFIDKVRFLEQQNQVLGTKWELL) are coil 1A. Residues 141–468 (EREQIMALNN…KLLEGEECWM (328 aa)) enclose the IF rod domain. Positions 177–195 (QQMDLNNCRKNLEPILEGY) are linker 1. The tract at residues 196–287 (IGNLRKQLEM…CLYDAEVAQI (92 aa)) is coil 1B. A linker 12 region spans residues 288–311 (QTHTSETSVILSMDNNRYLDLDSI). A coil 2 region spans residues 312 to 464 (IAEVRAQYED…ATYSKLLEGE (153 aa)). Positions 465–550 (ECWMSGENPS…VSSRARKAAR (86 aa)) are tail. Residues 491–550 (HPGSSASTDLGASTMASTGTSSSSSTQSGQTRAKGARVGDPKDSQDKSTPVSSRARKAAR) are disordered. Residues 502-521 (ASTMASTGTSSSSSTQSGQT) are compositionally biased toward low complexity. Over residues 527–536 (RVGDPKDSQD) the composition is skewed to basic and acidic residues.

It belongs to the intermediate filament family. As to quaternary structure, heterotetramer of two type I and two type II keratins.

Has a role in hair formation. Specific component of keratin intermediate filaments in the inner root sheath (IRS) of the hair follicle. The protein is Keratin, type II cytoskeletal 74 (KRT74) of Bos taurus (Bovine).